A 299-amino-acid polypeptide reads, in one-letter code: Fibrinogen silencer-binding protein (299 aa).

Lys-94 is covalently cross-linked (Glycyl lysine isopeptide (Lys-Gly) (interchain with G-Cter in SUMO2)).

Interacts with APBA1 (via PDZ 1 and 2 domains). Expressed in multiple tissues including brain.

It is found in the nucleus. In terms of biological role, transcriptional repressor that down-regulates the expression of the fibrinogen gamma chain. Represses transcription of GSK3B gene promoter via its interaction with APBA1. This is Fibrinogen silencer-binding protein (FSBP) from Homo sapiens (Human).